A 329-amino-acid polypeptide reads, in one-letter code: uncharacterized protein (329 aa).

It to type I restriction system adenine methylases.

This is an uncharacterized protein from Bacillus subtilis (strain 168).